The following is a 166-amino-acid chain: MRQGLVPKKVFFTSGVGRHREMLESFEMALRDAGIEKFNLVTVSSILPPDCEIVQKSEGLPSLYPGEIVFTVMSRNSSNEPSRRIAASIGCAIPKDPVKNFGYLSEHHSYGETEQYAGMYAEKLAENMLFTWTKEKPGKTMNISKTAEVDDEGNWTTVISAAVFIL.

Serine 45 carries the post-translational modification Pyruvic acid (Ser).

It belongs to the PdaD family. It depends on pyruvate as a cofactor.

It carries out the reaction L-arginine + H(+) = agmatine + CO2. The protein is Pyruvoyl-dependent arginine decarboxylase of Methanocella arvoryzae (strain DSM 22066 / NBRC 105507 / MRE50).